The primary structure comprises 256 residues: Imidazole glycerol phosphate synthase subunit HisF (256 aa).

Active-site residues include Asp-11 and Asp-130.

This sequence belongs to the HisA/HisF family. In terms of assembly, heterodimer of HisH and HisF.

The protein resides in the cytoplasm. The catalysed reaction is 5-[(5-phospho-1-deoxy-D-ribulos-1-ylimino)methylamino]-1-(5-phospho-beta-D-ribosyl)imidazole-4-carboxamide + L-glutamine = D-erythro-1-(imidazol-4-yl)glycerol 3-phosphate + 5-amino-1-(5-phospho-beta-D-ribosyl)imidazole-4-carboxamide + L-glutamate + H(+). It functions in the pathway amino-acid biosynthesis; L-histidine biosynthesis; L-histidine from 5-phospho-alpha-D-ribose 1-diphosphate: step 5/9. Functionally, IGPS catalyzes the conversion of PRFAR and glutamine to IGP, AICAR and glutamate. The HisF subunit catalyzes the cyclization activity that produces IGP and AICAR from PRFAR using the ammonia provided by the HisH subunit. This Cupriavidus pinatubonensis (strain JMP 134 / LMG 1197) (Cupriavidus necator (strain JMP 134)) protein is Imidazole glycerol phosphate synthase subunit HisF.